Reading from the N-terminus, the 169-residue chain is Transcription regulatory protein SNF11 (169 aa).

Residues 1–24 form a disordered region; that stretch reads MSSEIAYSNTNTNTENENRNTGAG. At S2 the chain carries N-acetylserine. Positions 9 to 21 are enriched in low complexity; the sequence is NTNTNTENENRNT. Repeat copies occupy residues 28 to 31, 32 to 35, 36 to 39, 40 to 43, 44 to 47, 48 to 51, 76 to 80, and 160 to 165. The segment at 28 to 51 is 6 X 4 AA tandem repeats of N-[AT]-[NT]-A; sequence NTNANANANATANATANATANATA. Residues 76–165 form a 2 X 5 AA repeats of L-L-A-R-V region; it reads LLARVIQMNN…SKLYLLLARV (90 aa).

As to quaternary structure, component of the SWI/SNF global transcription activator complex. The 1.14 MDa SWI/SNF complex is composed of 11 different subunits: one copy each of SWI1, SNF2/SWI2, SNF5, SNF12/SWP73, ARP7/SWP61, ARP9/SWP59; two copies each of SWI3, SNF6, SNF11, SWP82; and three copies of TAF14/SWP29.

It localises to the nucleus. Its function is as follows. Involved in transcriptional activation. Component of the SWI/SNF complex, an ATP-dependent chromatin remodeling complex, which is required for the positive and negative regulation of gene expression of a large number of genes. It changes chromatin structure by altering DNA-histone contacts within a nucleosome, leading eventually to a change in nucleosome position, thus facilitating or repressing binding of gene-specific transcription factors. The sequence is that of Transcription regulatory protein SNF11 (SNF11) from Saccharomyces cerevisiae (strain ATCC 204508 / S288c) (Baker's yeast).